The following is a 400-amino-acid chain: MNFLLCIFKGVYVIKLIQRFFKLESAGGILLLFSAVVAMLLANSPLSNQYNDFLNLPVSLQIGSFSINKTLIHWINDGFMAVFFVLVGMEVKKELFEGALSTYQQAIFPAIAAIGGMVIPAVVYWFIAKQDPSLANGWAIPMATDIAFALGIMALLSKQVPLPLKIFLLALAIIDDLGAIVVIALFFSHGLSVQALIFSAVAIIVLILLNRFRVSALCAYMVVGAILWASVLKSGVHATLAGVIIGFSIPLKGKKGERPLDDFEHILASWSSFVILPLFAFANAGVSFAGIDVNMISSPLLLAIASGLIIGKPVGIFGFSYISVKLGLAKLPDGINFKQIFAVAVLCGIGFTMSMFLASLAFDANAGESVNTLSRLGILLGSTVSAILGYLFLKQTTKLN.

The next 11 helical transmembrane spans lie at 26 to 46 (AGGI…NSPL), 71 to 91 (LIHW…GMEV), 107 to 127 (IFPA…YWFI), 137 to 157 (GWAI…ALLS), 166 to 186 (IFLL…IALF), 189 to 209 (HGLS…LILL), 225 to 245 (AILW…GVII), 273 to 293 (FVIL…GIDV), 299 to 319 (PLLL…IFGF), 340 to 360 (IFAV…LASL), and 373 to 393 (LSRL…YLFL).

The protein belongs to the NhaA Na(+)/H(+) (TC 2.A.33) antiporter family.

Its subcellular location is the cell inner membrane. It catalyses the reaction Na(+)(in) + 2 H(+)(out) = Na(+)(out) + 2 H(+)(in). Functionally, na(+)/H(+) antiporter that extrudes sodium in exchange for external protons. The chain is Na(+)/H(+) antiporter NhaA from Haemophilus influenzae (strain ATCC 51907 / DSM 11121 / KW20 / Rd).